A 315-amino-acid chain; its full sequence is Ribosomal protein L11 methyltransferase (315 aa).

Residues Thr-152, Gly-185, Asp-207, and Asn-249 each contribute to the S-adenosyl-L-methionine site.

The protein belongs to the methyltransferase superfamily. PrmA family.

It localises to the cytoplasm. The enzyme catalyses L-lysyl-[protein] + 3 S-adenosyl-L-methionine = N(6),N(6),N(6)-trimethyl-L-lysyl-[protein] + 3 S-adenosyl-L-homocysteine + 3 H(+). In terms of biological role, methylates ribosomal protein L11. The sequence is that of Ribosomal protein L11 methyltransferase from Geotalea uraniireducens (strain Rf4) (Geobacter uraniireducens).